Reading from the N-terminus, the 901-residue chain is HTH-type transcriptional regulator MalT (901 aa).

Position 39–46 (39–46 (SPAGYGKT)) interacts with ATP. The 66-residue stretch at 829–894 (ELIRTSPLTQ…DAVQHAQQLL (66 aa)) folds into the HTH luxR-type domain. Positions 853-872 (NEQIAGELAVAATTIKTHIR) form a DNA-binding region, H-T-H motif.

It belongs to the MalT family. In terms of assembly, monomer in solution. Oligomerizes to an active state in the presence of the positive effectors ATP and maltotriose.

Activated by ATP and maltotriose, which are both required for DNA binding. Functionally, positively regulates the transcription of the maltose regulon whose gene products are responsible for uptake and catabolism of malto-oligosaccharides. Specifically binds to the promoter region of its target genes, recognizing a short DNA motif called the MalT box. The polypeptide is HTH-type transcriptional regulator MalT (Salmonella typhimurium (strain LT2 / SGSC1412 / ATCC 700720)).